Consider the following 711-residue polypeptide: Early transcription factor 82 kDa subunit (711 aa).

This sequence belongs to the poxviridae VETF large subunit family. Heterodimer of a 70 kDa and a 82 kDa subunit. Part of the early transcription complex composed of ETF, RAP94, and the DNA-directed RNA polymerase.

In terms of biological role, acts with RNA polymerase to initiate transcription from early gene promoters. Is recruited by the RPO-associated protein of 94 kDa (RAP94) to form the early transcription complex, which also contains the core RNA polymerase. ETF heterodimer binds to early gene promoters. The chain is Early transcription factor 82 kDa subunit (VETFL) from Oryctolagus cuniculus (Rabbit).